A 183-amino-acid chain; its full sequence is Regulatory protein RecX (183 aa).

The segment covering 1–12 (MTSFPHPSTSES) has biased composition (polar residues). A disordered region spans residues 1-26 (MTSFPHPSTSESGPDPDSEPNREEQA).

The protein belongs to the RecX family.

The protein localises to the cytoplasm. Functionally, modulates RecA activity. This is Regulatory protein RecX from Mycobacterium sp. (strain JLS).